The chain runs to 250 residues: uncharacterized protein (250 aa).

4Fe-4S ferredoxin-type domains follow at residues lysine 38 to valine 67, lysine 69 to glycine 98, lysine 124 to arginine 153, lysine 154 to glutamate 183, arginine 191 to aspartate 220, and aspartate 220 to lysine 249. The [4Fe-4S] cluster site is built by cysteine 47, cysteine 50, cysteine 53, cysteine 57, cysteine 78, cysteine 81, cysteine 84, cysteine 88, cysteine 133, cysteine 136, cysteine 139, cysteine 143, cysteine 163, cysteine 166, cysteine 169, cysteine 173, cysteine 200, cysteine 203, cysteine 206, cysteine 210, cysteine 229, cysteine 232, cysteine 235, and cysteine 239.

This is an uncharacterized protein from Methanocaldococcus jannaschii (strain ATCC 43067 / DSM 2661 / JAL-1 / JCM 10045 / NBRC 100440) (Methanococcus jannaschii).